We begin with the raw amino-acid sequence, 217 residues long: PRA1 family protein B3 (217 aa).

Residues 1-24 form a disordered region; sequence MMANPPTLPISDHSGGGSQSQQPV. 5 consecutive transmembrane segments (helical) span residues 76–96, 98–118, 138–158, 162–182, and 193–213; these read LPYF…LSLL, HPFS…LYLF, LGVL…GSLL, LMIG…EDLF, and LLSF…STPA.

It belongs to the PRA1 family. In terms of assembly, interacts with PRA1B1, PRA1B2, PRA1B4, PRA1B5, PRA1B6 and PRA1E. Expressed in hypocotyls and shoot apex.

It is found in the endosome membrane. Functionally, may be involved in both secretory and endocytic intracellular trafficking in the endosomal/prevacuolar compartments. In Arabidopsis thaliana (Mouse-ear cress), this protein is PRA1 family protein B3 (PRA1B3).